We begin with the raw amino-acid sequence, 475 residues long: MRDYTKQYINGEWVESNSNETIEVINPATEEVIGKVAKGNKADVDKAVEAADNAYLEFRHTSVKERQALLDKIVKEYENRKDDIVQAITDELGAPLSLSERVHYQMGLNHFVAARDALDNYEFEERRGDDLVVKEAIGVSGLITPWNFPTNQTSLKLAAAFATGSPVVLKPSEETPFAAVILAEIFDKVGVPKGVFNLVNGDGAGVGNPLSEHPKVRMMSFTGSGPTGSKIMEKAAKDFKKVSLELGGKSPYIVLDDVDIKEAAKATTGKVVNNTGQVCTAGTRVLVPNKIKDAFLAELKEQFSQVRVGNPREDGTQVGPMISKKQFDQVQNYINKGIEEGAELFYGGPGKPEGLEKGYFARPTIFINVDNQMTIAQEEIFGPVMSVITYNDLDEAIQIANDTKYGLAGYVIGKDKETLHKVARSIEAGTVEINEAGRKPDLPFGGYKQSGLGREWGDYGIEEFLEVKSIAGYFK.

NAD(+) contacts are provided by residues 146-147 (WN) and 223-224 (GS). The Proton acceptor role is filled by glutamate 245. Residue leucine 246 coordinates NAD(+). Residue cysteine 279 is the Nucleophile of the active site. Glutamate 379 is an NAD(+) binding site.

This sequence belongs to the aldehyde dehydrogenase family.

The catalysed reaction is an aldehyde + NAD(+) + H2O = a carboxylate + NADH + 2 H(+). The sequence is that of Putative aldehyde dehydrogenase from Staphylococcus aureus (strain bovine RF122 / ET3-1).